A 651-amino-acid chain; its full sequence is Acetyl-coenzyme A synthetase (651 aa).

CoA-binding positions include 190 to 193 and Thr311; that span reads RRGK. ATP contacts are provided by residues 387 to 389, 411 to 416, Asp508, and Arg523; these read GEP and DTWWQT. Ser531 contacts CoA. Arg534 contributes to the ATP binding site. Positions 545, 547, and 550 each coordinate Mg(2+). An N6-acetyllysine modification is found at Lys617.

The protein belongs to the ATP-dependent AMP-binding enzyme family. Requires Mg(2+) as cofactor. Acetylated. Deacetylation by the SIR2-homolog deacetylase activates the enzyme.

It carries out the reaction acetate + ATP + CoA = acetyl-CoA + AMP + diphosphate. In terms of biological role, catalyzes the conversion of acetate into acetyl-CoA (AcCoA), an essential intermediate at the junction of anabolic and catabolic pathways. AcsA undergoes a two-step reaction. In the first half reaction, AcsA combines acetate with ATP to form acetyl-adenylate (AcAMP) intermediate. In the second half reaction, it can then transfer the acetyl group from AcAMP to the sulfhydryl group of CoA, forming the product AcCoA. The polypeptide is Acetyl-coenzyme A synthetase (Mycobacterium bovis (strain ATCC BAA-935 / AF2122/97)).